Here is a 453-residue protein sequence, read N- to C-terminus: Bifunctional protein GlmU (453 aa).

The tract at residues 1 to 225 (MNIVILAAGT…EWETLGVNSK (225 aa)) is pyrophosphorylase. Residues 6–9 (LAAG), Lys20, Gln71, 76–77 (GT), 98–100 (YGD), Gly135, Glu150, Asn165, and Asn223 contribute to the UDP-N-acetyl-alpha-D-glucosamine site. Asp100 is a Mg(2+) binding site. Asn223 is a Mg(2+) binding site. Residues 226–246 (AQLAELERIHQRNVADALLAD) form a linker region. The tract at residues 247-453 (GVTLADPARI…GYVRPVKKKS (207 aa)) is N-acetyltransferase. Positions 329 and 347 each coordinate UDP-N-acetyl-alpha-D-glucosamine. His359 (proton acceptor) is an active-site residue. UDP-N-acetyl-alpha-D-glucosamine-binding residues include Tyr362 and Asn373. Residues Ala376, 382 to 383 (NY), Ser401, and Ala419 contribute to the acetyl-CoA site.

In the N-terminal section; belongs to the N-acetylglucosamine-1-phosphate uridyltransferase family. This sequence in the C-terminal section; belongs to the transferase hexapeptide repeat family. As to quaternary structure, homotrimer. Mg(2+) serves as cofactor.

The protein resides in the cytoplasm. The enzyme catalyses alpha-D-glucosamine 1-phosphate + acetyl-CoA = N-acetyl-alpha-D-glucosamine 1-phosphate + CoA + H(+). The catalysed reaction is N-acetyl-alpha-D-glucosamine 1-phosphate + UTP + H(+) = UDP-N-acetyl-alpha-D-glucosamine + diphosphate. It functions in the pathway nucleotide-sugar biosynthesis; UDP-N-acetyl-alpha-D-glucosamine biosynthesis; N-acetyl-alpha-D-glucosamine 1-phosphate from alpha-D-glucosamine 6-phosphate (route II): step 2/2. The protein operates within nucleotide-sugar biosynthesis; UDP-N-acetyl-alpha-D-glucosamine biosynthesis; UDP-N-acetyl-alpha-D-glucosamine from N-acetyl-alpha-D-glucosamine 1-phosphate: step 1/1. It participates in bacterial outer membrane biogenesis; LPS lipid A biosynthesis. In terms of biological role, catalyzes the last two sequential reactions in the de novo biosynthetic pathway for UDP-N-acetylglucosamine (UDP-GlcNAc). The C-terminal domain catalyzes the transfer of acetyl group from acetyl coenzyme A to glucosamine-1-phosphate (GlcN-1-P) to produce N-acetylglucosamine-1-phosphate (GlcNAc-1-P), which is converted into UDP-GlcNAc by the transfer of uridine 5-monophosphate (from uridine 5-triphosphate), a reaction catalyzed by the N-terminal domain. The sequence is that of Bifunctional protein GlmU from Burkholderia multivorans (strain ATCC 17616 / 249).